Reading from the N-terminus, the 670-residue chain is Pescadillo homolog (670 aa).

The stretch at 292 to 321 (GANQAQAKVKEAESKRSLMEEELLKVRELF) forms a coiled coil. Residues 316–402 (KVRELFRGLT…QMLPVTGYRI (87 aa)) form the BRCT domain. Residues 643-670 (RQRAEAKGKKLKEKKADNPYKKLPKWVQ) are disordered. Basic and acidic residues predominate over residues 644 to 662 (QRAEAKGKKLKEKKADNPY).

The protein belongs to the pescadillo family.

The protein resides in the nucleus. Its subcellular location is the nucleolus. It is found in the nucleoplasm. In terms of biological role, required for maturation of ribosomal RNAs and formation of the large ribosomal subunit. The sequence is that of Pescadillo homolog from Leishmania braziliensis.